Consider the following 199-residue polypeptide: MNLFQRVKYNFEESIKTKTAAIELLVDPIVQAGELMAQCLLNEHKILSCGNGGSAADAQHFSSEMLNRFETERPSFPALALTTDASTVTAIANDYSYAEVFSKQIAGLGSTGDILLAISTSGHSKNILQAITAAHIRGMNVVALTGRDGGELFTLLGTDDIEIRVPAESTARIQETHALIIHCLCDIIDRKLIPSSEDH.

The 163-residue stretch at 36-198 folds into the SIS domain; sequence MAQCLLNEHK…DRKLIPSSED (163 aa). Residue 51–53 coordinates substrate; that stretch reads NGG. Zn(2+)-binding residues include histidine 60 and glutamate 64. Substrate is bound by residues glutamate 64, 93-94, 119-121, serine 124, and glutamine 174; these read ND and STS. The Zn(2+) site is built by glutamine 174 and histidine 182.

The protein belongs to the SIS family. GmhA subfamily. As to quaternary structure, homotetramer. It depends on Zn(2+) as a cofactor.

It is found in the cytoplasm. The enzyme catalyses 2 D-sedoheptulose 7-phosphate = D-glycero-alpha-D-manno-heptose 7-phosphate + D-glycero-beta-D-manno-heptose 7-phosphate. Its pathway is carbohydrate biosynthesis; D-glycero-D-manno-heptose 7-phosphate biosynthesis; D-glycero-alpha-D-manno-heptose 7-phosphate and D-glycero-beta-D-manno-heptose 7-phosphate from sedoheptulose 7-phosphate: step 1/1. In terms of biological role, catalyzes the isomerization of sedoheptulose 7-phosphate in D-glycero-D-manno-heptose 7-phosphate. This chain is Phosphoheptose isomerase, found in Coxiella burnetii (strain CbuK_Q154) (Coxiella burnetii (strain Q154)).